Reading from the N-terminus, the 402-residue chain is Phosphoglycerate kinase (402 aa).

Substrate-binding positions include 24–26 (DFN), Arg40, 63–66 (HFGR), Arg122, and Arg155. ATP-binding positions include Lys206, Gly297, Glu328, and 357-360 (GGDS).

This sequence belongs to the phosphoglycerate kinase family. As to quaternary structure, monomer.

It is found in the cytoplasm. The catalysed reaction is (2R)-3-phosphoglycerate + ATP = (2R)-3-phospho-glyceroyl phosphate + ADP. Its pathway is carbohydrate degradation; glycolysis; pyruvate from D-glyceraldehyde 3-phosphate: step 2/5. In Synechococcus sp. (strain RCC307), this protein is Phosphoglycerate kinase.